Reading from the N-terminus, the 200-residue chain is Holliday junction branch migration complex subunit RuvA (200 aa).

Positions Met1–Pro63 are domain I. The domain II stretch occupies residues Asp64–Pro142. The segment at Pro142–Gly146 is flexible linker. Positions Gly147 to Arg200 are domain III.

The protein belongs to the RuvA family. As to quaternary structure, homotetramer. Forms an RuvA(8)-RuvB(12)-Holliday junction (HJ) complex. HJ DNA is sandwiched between 2 RuvA tetramers; dsDNA enters through RuvA and exits via RuvB. An RuvB hexamer assembles on each DNA strand where it exits the tetramer. Each RuvB hexamer is contacted by two RuvA subunits (via domain III) on 2 adjacent RuvB subunits; this complex drives branch migration. In the full resolvosome a probable DNA-RuvA(4)-RuvB(12)-RuvC(2) complex forms which resolves the HJ.

Its subcellular location is the cytoplasm. The RuvA-RuvB-RuvC complex processes Holliday junction (HJ) DNA during genetic recombination and DNA repair, while the RuvA-RuvB complex plays an important role in the rescue of blocked DNA replication forks via replication fork reversal (RFR). RuvA specifically binds to HJ cruciform DNA, conferring on it an open structure. The RuvB hexamer acts as an ATP-dependent pump, pulling dsDNA into and through the RuvAB complex. HJ branch migration allows RuvC to scan DNA until it finds its consensus sequence, where it cleaves and resolves the cruciform DNA. This is Holliday junction branch migration complex subunit RuvA from Rhodococcus opacus (strain B4).